Reading from the N-terminus, the 536-residue chain is Quinate permease (536 aa).

Over 1–26 (MTLLALKEDRPTPKAVYNWRVYTCAA) the chain is Cytoplasmic. A helical transmembrane segment spans residues 27-47 (IASFASCMIGYDSAFIGTTLA). Over 48–74 (LPSFKKEFDFASYTPGALALLQSNIVS) the chain is Extracellular. Residues 75–95 (VYQAGAFFGSLFAFATSYFLG) form a helical membrane-spanning segment. Residues 96 to 98 (RRK) lie on the Cytoplasmic side of the membrane. Residues 99–119 (SLIAFSVVFIIGAAIMLAADG) form a helical membrane-spanning segment. At 120–131 (QGRGIAPIIAGR) the chain is on the extracellular side. Residues 132–152 (VLAGIGVGGASNMVPIYISEL) traverse the membrane as a helical segment. Over 153–160 (APPAVRGR) the chain is Cytoplasmic. The chain crosses the membrane as a helical span at residues 161–181 (LVGIYELGWQIGGLVGFWINY). The Extracellular portion of the chain corresponds to 182-195 (GVNTTMAPTRSQWL). Asparagine 184 is a glycosylation site (N-linked (GlcNAc...) asparagine). The helical transmembrane segment at 196–216 (IPFAVQLIPAGLLFLGSFWIP) threads the bilayer. The Cytoplasmic portion of the chain corresponds to 217-285 (ESPRWLFANG…SLKQRKVQWR (69 aa)). The helical transmembrane segment at 286–306 (FFLGGMLFLWQNGSGINAINY) threads the bilayer. Topologically, residues 307 to 327 (YSPTVFRSIGITGTNTGFLTT) are extracellular. The helical transmembrane segment at 328–349 (GIFGVVKMVLTIVWLLWLVDLV) threads the bilayer. The Cytoplasmic segment spans residues 350 to 352 (GRR). The chain crosses the membrane as a helical span at residues 353–373 (RMLFIGATGGSLCMWFIGAYI). The Extracellular segment spans residues 374-389 (KIAGPGSTKAEDAKLT). Residues 390-410 (SGGIAAIFFFYLWTAFYTPSW) form a helical membrane-spanning segment. Residues 411-435 (NGTPWVINSEMFDQNTRSLGQASAA) lie on the Cytoplasmic side of the membrane. Residues 436 to 456 (ANNWFWNFIISRFTPQMFIKM) traverse the membrane as a helical segment. Residues 457-458 (EY) lie on the Extracellular side of the membrane. The helical transmembrane segment at 459–479 (GVYFFFASLMLLSIVFIYFFI) threads the bilayer. The Cytoplasmic portion of the chain corresponds to 480–536 (PETKSIPLEAMDRLFEIKPVHNANKILMAELNFDRNPEREESSLDEKDRVTQTENAV). Residues 516-530 (PEREESSLDEKDRVT) show a composition bias toward basic and acidic residues. The interval 516-536 (PEREESSLDEKDRVTQTENAV) is disordered.

It belongs to the major facilitator superfamily. Sugar transporter (TC 2.A.1.1) family.

Its subcellular location is the membrane. The chain is Quinate permease (qa-y) from Neurospora terricola.